The following is a 242-amino-acid chain: uncharacterized protein (242 aa).

This is an uncharacterized protein from Aquifex aeolicus (strain VF5).